The following is a 420-amino-acid chain: DNA repair protein NreA (420 aa).

The short motif at 413 to 420 (QTDIFDFA) is the PIP motif element.

Belongs to the Nre family. In terms of assembly, interacts with the DNA polymerase sliding clamp (PCNA) via the PIP (PCNA-interacting peptide) motif.

Involved in DNA damage repair. Works together with the UvrABC proteins in repairing DNA damage resulting from exposure to the DNA damaging agent mitomycin C (MMC). In Haloferax volcanii (strain ATCC 29605 / DSM 3757 / JCM 8879 / NBRC 14742 / NCIMB 2012 / VKM B-1768 / DS2) (Halobacterium volcanii), this protein is DNA repair protein NreA.